We begin with the raw amino-acid sequence, 360 residues long: Peptide chain release factor 1 (360 aa).

N5-methylglutamine is present on Q236. The tract at residues 288-308 (QDEQDAERKSTIGTGDRSERI) is disordered. The span at 293-308 (AERKSTIGTGDRSERI) shows a compositional bias: basic and acidic residues.

This sequence belongs to the prokaryotic/mitochondrial release factor family. Post-translationally, methylated by PrmC. Methylation increases the termination efficiency of RF1.

It is found in the cytoplasm. In terms of biological role, peptide chain release factor 1 directs the termination of translation in response to the peptide chain termination codons UAG and UAA. The polypeptide is Peptide chain release factor 1 (Streptococcus equi subsp. zooepidemicus (strain H70)).